The following is a 58-amino-acid chain: Ribosome modulation factor (58 aa).

It belongs to the ribosome modulation factor family.

The protein localises to the cytoplasm. In terms of biological role, during stationary phase, converts 70S ribosomes to an inactive dimeric form (100S ribosomes). This chain is Ribosome modulation factor, found in Tolumonas auensis (strain DSM 9187 / NBRC 110442 / TA 4).